The primary structure comprises 728 residues: Microtubule-associated protein VP5 (728 aa).

The protein belongs to the reoviridae microtubule-associated protein family.

Its subcellular location is the virion. The protein localises to the host cytoplasm. It is found in the host cytoskeleton. Functionally, minor inner capsid component. Displays NTPase and RNA 5'-triphosphatase (RTPase) activities. May function as a cofactor of polymerase. Associates with microtubules and plays a role in the formation, structural organization and morphology of viral inclusions, where the assembly of cores and the replication of viral RNA occur. This is Microtubule-associated protein VP5 (S5) from Aquareovirus C (isolate Golden shiner/USA/GSRV/1977) (AQRV-C).